A 506-amino-acid polypeptide reads, in one-letter code: Probable cytosol aminopeptidase (506 aa).

Residues Lys270 and Asp275 each coordinate Mn(2+). The active site involves Lys282. 3 residues coordinate Mn(2+): Asp293, Asp352, and Glu354. Arg356 is an active-site residue.

This sequence belongs to the peptidase M17 family. It depends on Mn(2+) as a cofactor.

It localises to the cytoplasm. The catalysed reaction is Release of an N-terminal amino acid, Xaa-|-Yaa-, in which Xaa is preferably Leu, but may be other amino acids including Pro although not Arg or Lys, and Yaa may be Pro. Amino acid amides and methyl esters are also readily hydrolyzed, but rates on arylamides are exceedingly low.. The enzyme catalyses Release of an N-terminal amino acid, preferentially leucine, but not glutamic or aspartic acids.. Functionally, presumably involved in the processing and regular turnover of intracellular proteins. Catalyzes the removal of unsubstituted N-terminal amino acids from various peptides. The sequence is that of Probable cytosol aminopeptidase from Photorhabdus laumondii subsp. laumondii (strain DSM 15139 / CIP 105565 / TT01) (Photorhabdus luminescens subsp. laumondii).